Consider the following 34-residue polypeptide: Photosystem II reaction center protein Psb30 (34 aa).

Residues 5-25 (VLAQLTVLAFVIAVGPITLIW) traverse the membrane as a helical segment.

The protein belongs to the Psb30/Ycf12 family. In terms of assembly, PSII is composed of 1 copy each of membrane proteins PsbA, PsbB, PsbC, PsbD, PsbE, PsbF, PsbH, PsbI, PsbJ, PsbK, PsbL, PsbM, PsbT, PsbX, PsbY, PsbZ, Psb30/Ycf12, peripheral proteins of the oxygen-evolving complex and a large number of cofactors. It forms dimeric complexes.

The protein resides in the plastid. It localises to the chloroplast thylakoid membrane. Its function is as follows. A core subunit of photosystem II (PSII), probably helps stabilize the reaction center. The protein is Photosystem II reaction center protein Psb30 of Cyanidioschyzon merolae (strain NIES-3377 / 10D) (Unicellular red alga).